The chain runs to 381 residues: MRCLVVLLAVFALSQGAEITRIPLYKGKSLRKALKEHGLLEDFLQKQQYGISSKYSGFGEVASVPLTNYLDSQYFGKIYLGTPPQEFTVLFDTGSSDFWVPSIYCKSNACKNHQRFDPRKSSTFQNLGKPLSIHYGTGSMQGILGYDTVTVSNIVDIQQTVGLSTQEPGDVFTYAEFDGILGMAYPSLASEYSIPVFDNMMNRHLVAQDLFSVYMDRNGQESMLTLGAIDPSYYTGSLHWVPVTVQQYWQFTVDSVTISGVVVACEGGCQAILDTGTSKLVGPSSDILNIQQAIGATQNQYGEFDIDCDNLSYMPTVVFEINGKMYPLTPSAYTSQDQGFCTSGFQSENHSQKWILGDVFIREYYSVFDRANNLVGLAKAI.

Residues 1 to 16 (MRCLVVLLAVFALSQG) form the signal peptide. Positions 17–58 (AEITRIPLYKGKSLRKALKEHGLLEDFLQKQQYGISSKYSGF) are cleaved as a propeptide — activation peptide. The Peptidase A1 domain maps to 74 to 378 (YFGKIYLGTP…DRANNLVGLA (305 aa)). Aspartate 92 is a catalytic residue. Cystine bridges form between cysteine 105–cysteine 110 and cysteine 265–cysteine 269. Aspartate 274 is an active-site residue. A disulfide bridge links cysteine 308 with cysteine 341.

It belongs to the peptidase A1 family. In terms of assembly, monomer.

The enzyme catalyses Broad specificity similar to that of pepsin A. Clots milk by cleavage of a single 104-Ser-Phe-|-Met-Ala-107 bond in kappa-chain of casein.. In terms of biological role, chymosin is synthesized in the mucosa of the abomasum (fourth stomach) of young (unweaned) ruminants. The enzyme hydrolyzes casein to paracasein. This is Chymosin (CYM) from Bos taurus (Bovine).